The primary structure comprises 463 residues: Ribosomal protein uS12 methylthiotransferase RimO (463 aa).

The MTTase N-terminal domain occupies 15-130 (PKVGMVSLGC…VMQVVHSHLP (116 aa)). C24, C60, C89, C161, C165, and C168 together coordinate [4Fe-4S] cluster. One can recognise a Radical SAM core domain in the interval 147–392 (LTPRHYAYLK…MEVAEEVSAA (246 aa)). The TRAM domain occupies 395-463 (ERKVGKTLKV…ADGHDLWGEV (69 aa)).

It belongs to the methylthiotransferase family. RimO subfamily. The cofactor is [4Fe-4S] cluster.

It is found in the cytoplasm. The catalysed reaction is L-aspartate(89)-[ribosomal protein uS12]-hydrogen + (sulfur carrier)-SH + AH2 + 2 S-adenosyl-L-methionine = 3-methylsulfanyl-L-aspartate(89)-[ribosomal protein uS12]-hydrogen + (sulfur carrier)-H + 5'-deoxyadenosine + L-methionine + A + S-adenosyl-L-homocysteine + 2 H(+). In terms of biological role, catalyzes the methylthiolation of an aspartic acid residue of ribosomal protein uS12. This is Ribosomal protein uS12 methylthiotransferase RimO from Burkholderia thailandensis (strain ATCC 700388 / DSM 13276 / CCUG 48851 / CIP 106301 / E264).